A 529-amino-acid polypeptide reads, in one-letter code: Bifunctional purine biosynthesis protein PurH (529 aa).

In terms of domain architecture, MGS-like spans 1–148 (MQQRRPVRRA…KNHKDVAIVV (148 aa)). Lysine 287 carries the N6-acetyllysine modification.

This sequence belongs to the PurH family.

The catalysed reaction is (6R)-10-formyltetrahydrofolate + 5-amino-1-(5-phospho-beta-D-ribosyl)imidazole-4-carboxamide = 5-formamido-1-(5-phospho-D-ribosyl)imidazole-4-carboxamide + (6S)-5,6,7,8-tetrahydrofolate. The enzyme catalyses IMP + H2O = 5-formamido-1-(5-phospho-D-ribosyl)imidazole-4-carboxamide. It functions in the pathway purine metabolism; IMP biosynthesis via de novo pathway; 5-formamido-1-(5-phospho-D-ribosyl)imidazole-4-carboxamide from 5-amino-1-(5-phospho-D-ribosyl)imidazole-4-carboxamide (10-formyl THF route): step 1/1. Its pathway is purine metabolism; IMP biosynthesis via de novo pathway; IMP from 5-formamido-1-(5-phospho-D-ribosyl)imidazole-4-carboxamide: step 1/1. The polypeptide is Bifunctional purine biosynthesis protein PurH (Escherichia coli O157:H7).